A 217-amino-acid polypeptide reads, in one-letter code: MGKNFYSIMLSLAGICQSIVLVNQLSETGECHSKSFEICIDSMLNLYPTTVLSIYGNKEKNLKLGITTLMSLLNVNAILKCKNSIKMIRYIFNLITLENRLENNIKYKNILFKELSILIQQHKNRVYTYDLLADRLAQIYLDTVSKLGFRIQVSGSKKVLHNIVIQNKIRCILLSGIRATMLWKQIGGRRYQFVFYRNSIFHYADMILKKINDTKYS.

It belongs to the HflD family.

The protein localises to the cytoplasm. Its subcellular location is the cell membrane. The polypeptide is High frequency lysogenization protein HflD homolog (Buchnera aphidicola subsp. Baizongia pistaciae (strain Bp)).